A 955-amino-acid chain; its full sequence is MEKIYNPKHIEESLYFFWEKNGFFKPNHLEKSTFCIMMPPPNITGSLHMGHAFQQTIMDILIRYHRMQGKNTFWQVGTDHAGIATQILVERQIFEKEQKTKKDYSRDDFIKKIWEWKKQSSNIITKQMRRLGISVDWDYEKFTLDPDISNSVREAFIILYKNNLIYQKKKLVHWDSKLETVISDLEVEHRLIKGKKWFIRYPIIENDMSLRSKVKYLIVSTTRPETLLGDTAIAVNPEDYKYNQFIGNHVSCPLTNRIIPIIKDRYADLEKGTGCVKITPAHDFNDYKVGLHHKLPMINIFTFDGRIKSTAEVYNYKGEKSNQYSTCIPMQFQHLDILSARIEIIKEITKLGFLEKIEECNVTVPYSERSGVIIEPMLTNQWYLKTSTLAKVALNAVKDKKIKFIPQQYESMYSSWMNNIEDWCISRQLWWGHRIPVWYDDQKNIYIGQNEKEIRQAYSISENVLLKQENDVLDTWFSSGLWTFSSLGWPKKTTFLKTFHPTNVLVSGFDIIFFWIARMIMLTMYFMKDKHNNPEVPFKNIYITGLIRDEFGKKMSKSKGNVIDPLDMIDGISLSELIKKRTNNLLQPNLSDKIIQRTIKQFPEGIKSTGTDALRFTFSALASSTRDIQWDMNRLKGYRNFCNKLWNASRFVLINTQDHNFSKFDVKRKMLLINKWILIEFNNTVKLYRESLDTYRFDIAANILYDFIWNIFCDWYLEFVKIVIKLGSSKEVYCTKNVLVYVLELLLKLAHPIMPFITETIWQRIKLIQNISEKTIMLQDFPEYNHKLFDKKILVQMNWMKKIIVFLRNIRTNMNVSSTKLLPLFLYNINSEQEKVIKENISLIKNISFLDKITILSEKYDKDLCIKEIIDGAEIIIPILKLVDTKVELKRLVKEQKKTELNIFKIKTKILNKDFLSYAPTKIVTQEKNKLLKLNEINLKLSEQIKIFRNMSYKK.

The 'HIGH' region signature appears at 41–51 (PNITGSLHMGH). Residues 554-558 (KMSKS) carry the 'KMSKS' region motif. K557 contacts ATP. The stretch at 926-946 (QEKNKLLKLNEINLKLSEQIK) forms a coiled coil.

It belongs to the class-I aminoacyl-tRNA synthetase family. ValS type 1 subfamily. Monomer.

It localises to the cytoplasm. It catalyses the reaction tRNA(Val) + L-valine + ATP = L-valyl-tRNA(Val) + AMP + diphosphate. Catalyzes the attachment of valine to tRNA(Val). As ValRS can inadvertently accommodate and process structurally similar amino acids such as threonine, to avoid such errors, it has a 'posttransfer' editing activity that hydrolyzes mischarged Thr-tRNA(Val) in a tRNA-dependent manner. This is Valine--tRNA ligase from Buchnera aphidicola subsp. Acyrthosiphon pisum (strain APS) (Acyrthosiphon pisum symbiotic bacterium).